Reading from the N-terminus, the 755-residue chain is Tryptophan 2-monooxygenase (755 aa).

Residues Ser247, Glu267, Lys275, and Arg295 each contribute to the FMN site. Arg295 is a binding site for substrate.

It belongs to the tryptophan 2-monooxygenase family. The cofactor is FMN.

It catalyses the reaction L-tryptophan + O2 = indole-3-acetamide + CO2 + H2O. It functions in the pathway plant hormone metabolism; auxin biosynthesis. The sequence is that of Tryptophan 2-monooxygenase (tms1) from Rhizobium radiobacter (Agrobacterium tumefaciens).